Reading from the N-terminus, the 579-residue chain is XK-related protein 7 (579 aa).

Residues 1 to 18 show a composition bias toward low complexity; that stretch reads MAAKSDGAAASASPDPEG. The interval 1–40 is disordered; it reads MAAKSDGAAASASPDPEGAAGGARGSAGGRGEAAAAAGPP. Gly residues predominate over residues 19 to 31; sequence AAGGARGSAGGRG. A run of 2 helical transmembrane segments spans residues 59–79 and 89–109; these read WVLC…WLAA and YFSL…LLSF. Residues 146–165 are disordered; that stretch reads GAFRTKEGSPEPGPQPAPSS. Transmembrane regions (helical) follow at residues 260–280, 314–334, 355–375, 384–404, and 415–435; these read LLPA…LASY, GLAF…FIVA, WEEI…WFNV, MTLY…FWYS, and LIMV…MCVY. Positions 466-510 are disordered; it reads ADAITSPPRSLPRTTGAERDGASAGERAGTPTPPVFQVRPGLPPT.

Belongs to the XK family.

The protein resides in the cell membrane. This is XK-related protein 7 from Homo sapiens (Human).